A 32-amino-acid chain; its full sequence is ilv operon leader peptide (32 aa).

The chain is ilv operon leader peptide (ilvL) from Escherichia coli O157:H7.